Here is a 126-residue protein sequence, read N- to C-terminus: Prefoldin subunit beta (126 aa).

Belongs to the prefoldin subunit beta family. Heterohexamer of two alpha and four beta subunits.

Its subcellular location is the cytoplasm. Molecular chaperone capable of stabilizing a range of proteins. Seems to fulfill an ATP-independent, HSP70-like function in archaeal de novo protein folding. The polypeptide is Prefoldin subunit beta (Pyrobaculum neutrophilum (strain DSM 2338 / JCM 9278 / NBRC 100436 / V24Sta) (Thermoproteus neutrophilus)).